The sequence spans 219 residues: Flagellar transcriptional regulator FlhC (219 aa).

Zn(2+) contacts are provided by Cys-137, Cys-140, Cys-157, and Cys-160.

It belongs to the FlhC family. In terms of assembly, heterohexamer composed of two FlhC and four FlhD subunits. Each FlhC binds a FlhD dimer, forming a heterotrimer, and a hexamer assembles by dimerization of two heterotrimers. Zn(2+) is required as a cofactor.

It localises to the cytoplasm. In terms of biological role, functions in complex with FlhD as a master transcriptional regulator that regulates transcription of several flagellar and non-flagellar operons by binding to their promoter region. Activates expression of class 2 flagellar genes, including fliA, which is a flagellum-specific sigma factor that turns on the class 3 genes. Also regulates genes whose products function in a variety of physiological pathways. The chain is Flagellar transcriptional regulator FlhC from Paraburkholderia phymatum (strain DSM 17167 / CIP 108236 / LMG 21445 / STM815) (Burkholderia phymatum).